The sequence spans 400 residues: MDRVLHFVLALAVVAILALLVSSDRKKIRIRYVIQLLVIEVLLAWFFLNSDVGLGFVKGFSEMFEKLLGFANEGTNFVFGSMNDQGLAFFFLKVLCPIVFISALIGILQHIRVLPVIIRAIGFLLSKVNGMGKLESFNAVSSLILGQSENFIAYKDILGKISRNRMYTMAATAMSTVSMSIVGAYMTMLEPKYVVAALVLNMFSTFIVLSLINPYRVDASEENIQMSNLHEGQSFFEMLGEYILAGFKVAIIVAAMLIGFIALIAALNALFATVTGWFGYSISFQGILGYIFYPIAWVMGVPSSEALQVGSIMATKLVSNEFVAMMDLQKIASTLSPRAEGIISVFLVSFANFSSIGIIAGAVKGLNEEQGNVVSRFGLKLVYGSTLVSVLSASIAALVL.

Topologically, residues 1-3 (MDR) are cytoplasmic. The chain crosses the membrane as a helical span at residues 4 to 24 (VLHFVLALAVVAILALLVSSD). Over 25-36 (RKKIRIRYVIQL) the chain is Periplasmic. The helical transmembrane segment at 37–57 (LVIEVLLAWFFLNSDVGLGFV) threads the bilayer. The Cytoplasmic portion of the chain corresponds to 58–86 (KGFSEMFEKLLGFANEGTNFVFGSMNDQG). The helical transmembrane segment at 87 to 107 (LAFFFLKVLCPIVFISALIGI) threads the bilayer. Residues 108–168 (LQHIRVLPVI…GKISRNRMYT (61 aa)) are Periplasmic-facing. Residues 169–189 (MAATAMSTVSMSIVGAYMTML) form a helical membrane-spanning segment. The Cytoplasmic segment spans residues 190-192 (EPK). Residues 193–213 (YVVAALVLNMFSTFIVLSLIN) form a helical membrane-spanning segment. Residues 214-250 (PYRVDASEENIQMSNLHEGQSFFEMLGEYILAGFKVA) lie on the Periplasmic side of the membrane. Residues 251 to 271 (IIVAAMLIGFIALIAALNALF) form a helical membrane-spanning segment. Residues 272 to 281 (ATVTGWFGYS) are Cytoplasmic-facing. Residues 282–302 (ISFQGILGYIFYPIAWVMGVP) traverse the membrane as a helical segment. Over 303–341 (SSEALQVGSIMATKLVSNEFVAMMDLQKIASTLSPRAEG) the chain is Periplasmic. Residues 342 to 362 (IISVFLVSFANFSSIGIIAGA) form a helical membrane-spanning segment. The Cytoplasmic portion of the chain corresponds to 363-378 (VKGLNEEQGNVVSRFG). A helical transmembrane segment spans residues 379-399 (LKLVYGSTLVSVLSASIAALV). Residue leucine 400 is a topological domain, periplasmic.

The protein belongs to the concentrative nucleoside transporter (CNT) (TC 2.A.41) family.

It localises to the cell inner membrane. The enzyme catalyses adenosine(in) + H(+)(in) = adenosine(out) + H(+)(out). It carries out the reaction uridine(in) + H(+)(in) = uridine(out) + H(+)(out). The catalysed reaction is thymidine(in) + H(+)(in) = thymidine(out) + H(+)(out). It catalyses the reaction cytidine(in) + H(+)(in) = cytidine(out) + H(+)(out). The enzyme catalyses 2'-deoxycytidine(in) + H(+)(in) = 2'-deoxycytidine(out) + H(+)(out). Transport is inhibited by the proton uncoupler dinitrophenol. Inhibited by the nucleoside antibiotic showdomycin. Nucleoside transport protein that can transport adenosine, uridine, thymidine, cytidine and deoxycytidine. Shows weak activity with inosine and xanthosine. Transport is driven by a proton motive force. Does not transport guanosine, deoxyguanosine, hypoxanthine or uracil. Also shows activity with the chemotherapeutic drugs 3'-azido-3'-deoxythymidine (AZT), 2',3'- dideoxycytidine (ddC) and 2'-deoxy-2',2'-difluorocytidine (gemcitabine). The protein is Nucleoside permease NupC of Escherichia coli (strain K12).